The sequence spans 290 residues: Metallo-beta-lactamase L1 type 3 (290 aa).

The signal sequence occupies residues 1 to 21; it reads MRSTLLAFALAVALPAAHTSA. Residues 22 to 33 constitute a propeptide that is removed on maturation; sequence AEVPLPQLRAYT. Zn(2+) is bound by residues H105, H107, D109, H110, and H181. Residue D205 participates in substrate binding. An intrachain disulfide couples C239 to C267. H246 is a binding site for Zn(2+).

Belongs to the metallo-beta-lactamase superfamily. Class-B beta-lactamase family. In terms of assembly, homotetramer. It depends on Zn(2+) as a cofactor.

The protein resides in the periplasm. It catalyses the reaction a beta-lactam + H2O = a substituted beta-amino acid. With respect to regulation, inhibited by Hg(2+) or Cu(2+), and by chelating agents such as EDTA and O-phenanthroline. Reduced enzymatic activity in presence of cobalt, nickel, cadmium, and manganese. Functionally, confers resistance to the different beta-lactams antibiotics (penicillin, cephalosporin and carbapenem) via the hydrolysis of the beta-lactam ring. The protein is Metallo-beta-lactamase L1 type 3 of Stenotrophomonas maltophilia (Pseudomonas maltophilia).